A 397-amino-acid chain; its full sequence is Succinate--CoA ligase [ADP-forming] subunit beta (397 aa).

Positions Lys-9–Glu-254 constitute an ATP-grasp domain. Residues Lys-46, Gly-53 to Gly-55, Glu-109, Ala-112, and Glu-117 each bind ATP. Residues Asn-209 and Asp-223 each contribute to the Mg(2+) site. Residues Asn-274 and Gly-331 to Met-333 each bind substrate.

The protein belongs to the succinate/malate CoA ligase beta subunit family. As to quaternary structure, heterotetramer of two alpha and two beta subunits. Mg(2+) is required as a cofactor.

The catalysed reaction is succinate + ATP + CoA = succinyl-CoA + ADP + phosphate. It carries out the reaction GTP + succinate + CoA = succinyl-CoA + GDP + phosphate. Its pathway is carbohydrate metabolism; tricarboxylic acid cycle; succinate from succinyl-CoA (ligase route): step 1/1. In terms of biological role, succinyl-CoA synthetase functions in the citric acid cycle (TCA), coupling the hydrolysis of succinyl-CoA to the synthesis of either ATP or GTP and thus represents the only step of substrate-level phosphorylation in the TCA. The beta subunit provides nucleotide specificity of the enzyme and binds the substrate succinate, while the binding sites for coenzyme A and phosphate are found in the alpha subunit. The chain is Succinate--CoA ligase [ADP-forming] subunit beta from Rhizobium etli (strain ATCC 51251 / DSM 11541 / JCM 21823 / NBRC 15573 / CFN 42).